The chain runs to 460 residues: Endoglucanase 2 (460 aa).

A signal peptide spans 1–32; sequence MIKGSSLKRIKSLVMMAIFSVSIITTAIVSSA. The active-site Proton donor is E99. D155 (nucleophile) is an active-site residue. The Dockerin domain maps to 400 to 460; that stretch reads QQGLKGDVNN…FAQLKVKLLN (61 aa).

It belongs to the glycosyl hydrolase 8 (cellulase D) family.

It catalyses the reaction Endohydrolysis of (1-&gt;4)-beta-D-glucosidic linkages in cellulose, lichenin and cereal beta-D-glucans.. This Ruminiclostridium josui (Clostridium josui) protein is Endoglucanase 2 (celB).